We begin with the raw amino-acid sequence, 102 residues long: MAKEKIRIRLKAYDHRILDQSAEKIVETAKRSGATVSGPIPLPTEKTVYTILRAVHKYKDSREQFEMRTHKRLIDIVSPTPQTVDSLMRLDLXSGVDIEIKL.

It belongs to the universal ribosomal protein uS10 family. As to quaternary structure, part of the 30S ribosomal subunit.

Its function is as follows. Involved in the binding of tRNA to the ribosomes. The protein is Small ribosomal subunit protein uS10 of Bacillus cereus (strain ATCC 10987 / NRS 248).